The sequence spans 455 residues: Gamma-aminobutyric acid receptor subunit alpha-1 (455 aa).

The signal sequence occupies residues 1-27; the sequence is MKRLLVLCDCLWAWSLLLNALTERSYG. Residues 28–253 are Extracellular-facing; sequence QTSSQDELKD…FHLKRKIGYF (226 aa). Asn38 carries an N-linked (GlcNAc...) asparagine glycan. Arg94 serves as a coordination point for 4-aminobutanoate. An N-linked (GlcNAc...) asparagine glycan is attached at Asn138. Thr157 is a binding site for 4-aminobutanoate. Cysteines 166 and 180 form a disulfide. The chain crosses the membrane as a helical span at residues 254-274; the sequence is VIQTYLPCIMTVILSQVSFWL. The Cytoplasmic portion of the chain corresponds to 275-279; sequence NRESV. A helical transmembrane segment spans residues 280–301; the sequence is PARTVFGVTTVLTMTTLSISAR. At 302–311 the chain is on the extracellular side; sequence NSLPKVAYAT. Residues 312 to 333 traverse the membrane as a helical segment; the sequence is AMDWFIAVCYAFVFSALIEFAT. Residues 334-420 are Cytoplasmic-facing; that stretch reads VNYFTKRGYA…TFNSVSKIDR (87 aa). A helical membrane pass occupies residues 421–440; sequence LSRIAFPLLFGIFNLVYWAT. The Extracellular portion of the chain corresponds to 441–455; it reads YLNREPQLKAPTPHQ.

This sequence belongs to the ligand-gated ion channel (TC 1.A.9) family. Gamma-aminobutyric acid receptor (TC 1.A.9.5) subfamily. GABRA1 sub-subfamily. Heteropentamer, formed by a combination of alpha (GABRA1-6), beta (GABRB1-3), gamma (GABRG1-3), delta (GABRD), epsilon (GABRE), rho (GABRR1-3), pi (GABRP) and theta (GABRQ) subunits, each subunit exhibiting distinct physiological and pharmacological properties. As to expression, brain.

The protein localises to the postsynaptic cell membrane. Its subcellular location is the cell membrane. The enzyme catalyses chloride(in) = chloride(out). Its activity is regulated as follows. Allosterically activated by benzodiazepines, the neuroanesthetic alphaxalone and pentobarbital. Inhibited by the antagonist bicuculline. Potentiated by histamine. Its function is as follows. Alpha subunit of the heteropentameric ligand-gated chloride channel gated by gamma-aminobutyric acid (GABA), a major inhibitory neurotransmitter in the brain. GABA-gated chloride channels, also named GABA(A) receptors (GABAAR), consist of five subunits arranged around a central pore and contain GABA active binding site(s) located at the alpha and beta subunit interface(s). When activated by GABA, GABAARs selectively allow the flow of chloride anions across the cell membrane down their electrochemical gradient. Chloride influx into the postsynaptic neuron following GABAAR opening decreases the neuron ability to generate a new action potential, thereby reducing nerve transmission. The GABAARs can also initiate the formation of functional inhibitory GABAergic synapses. GABAARs function also as histamine receptor where histamine binds at the interface of two neighboring beta subunits and potentiates GABA response. This chain is Gamma-aminobutyric acid receptor subunit alpha-1 (GABRA1), found in Gallus gallus (Chicken).